The sequence spans 885 residues: Chromatin assembly factor 1 subunit A-B (885 aa).

4 disordered regions span residues 1-24, 115-157, 176-361, and 536-605; these read MPGK…KMVQ, EDSN…NEEC, LDKP…EEEK, and VDSD…QKLK. Residues 12 to 21 are compositionally biased toward low complexity; sequence KSSTKSNTKK. Polar residues-rich tracts occupy residues 116–128, 134–157, and 182–193; these read DSNI…SPLN, QLAN…NEEC, and SAASCTSVSNFS. 2 stretches are compositionally biased toward low complexity: residues 211 to 227 and 237 to 254; these read VSVS…SPDV and SSPS…SNKT. Residues 251-376 are a coiled coil; that stretch reads SNKTSAEKKK…KAEITRFLQK (126 aa). Residues 255–361 are compositionally biased toward basic and acidic residues; sequence SAEKKKTKDK…EEKRLKEEEK (107 aa). Composition is skewed to acidic residues over residues 536-548 and 557-573; these read VDSD…EEPG and ENED…DDDG. Residues 629–665 are necessary for homodimerization, competence for chromatin assembly; the sequence is CVWCDSKASEIRLLQKFSACILESPAVEEELTQDISS.

It belongs to the CHAF1A family. In terms of assembly, homodimer.

The protein localises to the nucleus. Functionally, involved in chromatin assembly in DNA replication and DNA repair. This is Chromatin assembly factor 1 subunit A-B (chaf1a-b) from Xenopus laevis (African clawed frog).